A 329-amino-acid chain; its full sequence is Quinone-oxidoreductase homolog, chloroplastic (329 aa).

It belongs to the zinc-containing alcohol dehydrogenase family. Quinone oxidoreductase subfamily. Post-translationally, the transit peptide is not cleaved.

Its subcellular location is the plastid. The protein resides in the chloroplast inner membrane. This chain is Quinone-oxidoreductase homolog, chloroplastic (QOR), found in Spinacia oleracea (Spinach).